The following is a 329-amino-acid chain: Cathepsin K (329 aa).

An N-terminal signal peptide occupies residues methionine 1 to alanine 15. A propeptide spans leucine 16 to arginine 114 (activation peptide). Asparagine 103 carries N-linked (GlcNAc...) asparagine glycosylation. Disulfide bonds link cysteine 136–cysteine 177, cysteine 170–cysteine 210, and cysteine 269–cysteine 318. The active site involves cysteine 139. Residues histidine 276 and asparagine 296 contribute to the active site.

This sequence belongs to the peptidase C1 family.

The protein resides in the lysosome. It localises to the secreted. Its subcellular location is the apical cell membrane. It catalyses the reaction Broad proteolytic activity. With small-molecule substrates and inhibitors, the major determinant of specificity is P2, which is preferably Leu, Met &gt; Phe, and not Arg.. In terms of biological role, thiol protease involved in osteoclastic bone resorption and may participate partially in the disorder of bone remodeling. Displays potent endoprotease activity against fibrinogen at acid pH. May play an important role in extracellular matrix degradation. Involved in the release of thyroid hormone thyroxine (T4) by limited proteolysis of TG/thyroglobulin in the thyroid follicle lumen. The sequence is that of Cathepsin K (CTSK) from Macaca fascicularis (Crab-eating macaque).